The following is a 409-amino-acid chain: Odorant receptor 35a (409 aa).

At 1 to 35 (MVRYVPRFADGQKVKLAWPLAVFRLNHIFWPLDPS) the chain is on the cytoplasmic side. A helical transmembrane segment spans residues 36-56 (TGKWGRYLDKVLAVAMSLVFM). Over 57–64 (QHNDAELR) the chain is Extracellular. A helical membrane pass occupies residues 65–85 (YLRFEASNRNLDAFLTGMPTY). Residues 86 to 139 (LILVEAQFRSLHILLHFEKLQKFLEIFYANIYIDPRKEPEMFRKVDGKMIINRL) lie on the Cytoplasmic side of the membrane. A helical membrane pass occupies residues 140-160 (VSAMYGAVISLYLIAPVFSII). Residue Asn-161 is glycosylated (N-linked (GlcNAc...) asparagine). At 161-177 (NQSKDFLYSMIFPFDSD) the chain is on the extracellular side. The chain crosses the membrane as a helical span at residues 178-198 (PLYIFVPLLLTNVWVGIVIDT). Over 199–273 (MMFGETNLLC…QQLEAQYTVR (75 aa)) the chain is Cytoplasmic. The chain crosses the membrane as a helical span at residues 274–294 (VFIMFAFAAGLLCALSFKAYT). At 295–302 (NPMANYIY) the chain is on the extracellular side. Residues 303 to 323 (AIWFGAKTVELLSLGQIGSDL) form a helical membrane-spanning segment. Over 324–379 (AFTTDSLSTMYYLTHWEQILQYSTNPSENLRLLKLINLAIEMNSKPFYVTGLKYFR) the chain is Cytoplasmic. Residues 380–400 (VSLQAGLKILQASFSYFTFLT) form a helical membrane-spanning segment. Residues 401–409 (SMQRRQMSN) are Extracellular-facing.

It belongs to the insect chemoreceptor superfamily. Heteromeric odorant receptor channel (TC 1.A.69) family. Or1a subfamily. As to quaternary structure, interacts with Orco. Complexes exist early in the endomembrane system in olfactory sensory neurons (OSNs), coupling these complexes to the conserved ciliary trafficking pathway. In terms of tissue distribution, expressed in ac3B olfactory sensory neurons in the antenna.

The protein resides in the cell membrane. Its function is as follows. Odorant receptor which mediates acceptance or avoidance behavior, depending on its substrates. The odorant receptor repertoire encodes a large collection of odor stimuli that vary widely in identity, intensity, and duration. Forms a complex with Orco to form odorant-sensing units, providing sensitive and prolonged odorant signaling and calcium permeability. Involved in the behavioral responses to esters. Involved in the behavioral responses to butanol, pentanol, hexanol, octanol, propyl acetate, and butyl acetate. The protein is Odorant receptor 35a (Or35a) of Drosophila melanogaster (Fruit fly).